We begin with the raw amino-acid sequence, 199 residues long: Superoxide dismutase [Mn/Fe] (199 aa).

Positions 27, 81, 161, and 165 each coordinate Fe(3+). Residues His-27, His-81, Asp-161, and His-165 each coordinate Mn(2+).

The protein belongs to the iron/manganese superoxide dismutase family. Homodimer. It depends on Mn(2+) as a cofactor. Fe(3+) serves as cofactor.

The enzyme catalyses 2 superoxide + 2 H(+) = H2O2 + O2. In terms of biological role, destroys superoxide anion radicals which are normally produced within the cells and which are toxic to biological systems. Catalyzes the dismutation of superoxide anion radicals into O2 and H2O2 by successive reduction and oxidation of the transition metal ion at the active site. The protein is Superoxide dismutase [Mn/Fe] (sodA) of Staphylococcus saprophyticus subsp. saprophyticus (strain ATCC 15305 / DSM 20229 / NCIMB 8711 / NCTC 7292 / S-41).